The primary structure comprises 1214 residues: Protein argonaute-2 (1214 aa).

The disordered stretch occupies residues 1–412; that stretch reads MGKKDKNKKG…GSIKRGTIGK (412 aa). 2 stretches are compositionally biased toward low complexity: residues 18–93 and 107–117; these read PQPQ…QQKS and KQQVQGWTKQG. Composition is skewed to gly residues over residues 118–131, 141–154, 164–177, 187–200, 210–223, 233–246, and 256–269; these read QQGGHQQGRQGQDG and QQGGHQQGRQGQEG. A compositionally biased stretch (low complexity) spans 270–282; the sequence is GYQQRPPGQQQGG. Composition is skewed to gly residues over residues 302–315, 325–338, and 348–361; these read QQGGHQQGRQGQEG. Residues 362–394 are compositionally biased toward low complexity; it reads GYQQRPPGQQPNQTQSQGQYQSRGPPQQQQAAP. Positions 608–717 constitute a PAZ domain; sequence LERFSLKAKI…LPIELCSIEE (110 aa). The tract at residues 681–686 is interaction with guide RNA; it reads YFHSRN. The Piwi domain occupies 885-1186; that stretch reads LAIVIIPQFR…ARGRVYLTGT (302 aa). Residues aspartate 965 and aspartate 1037 each contribute to the a divalent metal cation site. Interaction with guide RNA regions lie at residues 1075–1076, 1119–1127, and 1156–1178; these read KR, HQAIQGTAK, and FPRCNRSVSYPAPAYLAHLVAAR. Histidine 1173 lines the a divalent metal cation pocket.

Belongs to the argonaute family. Ago subfamily. In terms of assembly, interacts with Fmr1, Dcr-1 and vig to form the RNA-induced silencing complex (RISC), a ribonucleoprotein (RNP) complex involved in translation regulation, other components of the complex are RpL5, RpL11 and Rm62. As part of the RISC complex, interacts with Tudor-SN. Interacts with Taf11. As to quaternary structure, (Microbial infection) Interacts with cricket paralysis virus protein 1A; this interaction may block the RISC activity. Mg(2+) serves as cofactor. Mn(2+) is required as a cofactor.

The protein localises to the nucleus. It is found in the cytoplasm. It localises to the cytoplasmic ribonucleoprotein granule. Essential for RNA interference (RNAi); double-stranded RNA induces potent and specific gene silencing. RNAi is mediated by the RNA-induced silencing complex (RISC), a sequence-specific, multicomponent nuclease that destroys or silences messenger RNAs homologous to the silencing trigger. This is Protein argonaute-2 from Drosophila melanogaster (Fruit fly).